Here is a 20-residue protein sequence, read N- to C-terminus: Pregnancy-associated glycoprotein 61C (20 aa).

Belongs to the peptidase A1 family. N-glycosylated. As to expression, expressed in chorionic epithelium (trophectoderm).

Its subcellular location is the secreted. The protein localises to the extracellular space. The polypeptide is Pregnancy-associated glycoprotein 61C (Bubalus bubalis (Domestic water buffalo)).